We begin with the raw amino-acid sequence, 155 residues long: 3-hydroxyacyl-[acyl-carrier-protein] dehydratase FabZ (155 aa).

H54 is an active-site residue.

Belongs to the thioester dehydratase family. FabZ subfamily.

It localises to the cytoplasm. It carries out the reaction a (3R)-hydroxyacyl-[ACP] = a (2E)-enoyl-[ACP] + H2O. In terms of biological role, involved in unsaturated fatty acids biosynthesis. Catalyzes the dehydration of short chain beta-hydroxyacyl-ACPs and long chain saturated and unsaturated beta-hydroxyacyl-ACPs. This is 3-hydroxyacyl-[acyl-carrier-protein] dehydratase FabZ from Burkholderia ambifaria (strain MC40-6).